A 235-amino-acid polypeptide reads, in one-letter code: Vacuolar protein sorting-associated protein 60.1 (235 aa).

The tract at residues 1-29 (MRRVFGAKKNTEPPPSIQDASDRINKRGD) is disordered. Residues 20–29 (ASDRINKRGD) are compositionally biased toward basic and acidic residues. Positions 99 to 148 (LKDAQQTMTALKSANKELKGMMKTVKIQDIDNLQDEMMDLMDVSSEIQES) form a coiled coil. The tract at residues 175–235 (MGNETEADGM…PAVPRASLRG (61 aa)) is disordered.

This sequence belongs to the SNF7 family. In terms of assembly, interacts with SKD1/VPS4 and LIP5. Interacts with VPS2.2.

It is found in the endosome. It localises to the multivesicular body membrane. Its function is as follows. Probable peripherally associated component of the endosomal sorting required for transport complex III (ESCRT-III) which is involved in multivesicular bodies (MVBs) formation and sorting of endosomal cargo proteins into MVBs. This is Vacuolar protein sorting-associated protein 60.1 from Arabidopsis thaliana (Mouse-ear cress).